The primary structure comprises 356 residues: Cdc42 effector protein 4 (356 aa).

N6-methyllysine is present on Lys5. Ser18 is modified (phosphoserine). The 15-residue stretch at 27–41 (ISAPLGDFRHTMHVG) folds into the CRIB domain. The tract at residues 51 to 102 (SFLNSKAGEPDGESLDEQPSSSSSKRSLLSRKFRGSKRSQSVTRGEREQRDM) is disordered. Ser64 carries the post-translational modification Phosphoserine. Over residues 78-87 (LLSRKFRGSK) the composition is skewed to basic residues. Phosphoserine occurs at positions 105, 109, and 118. Disordered regions lie at residues 122 to 182 (LNEK…LDEQ) and 257 to 356 (VAAP…EIRV). The span at 123-132 (NEKEAAEKGT) shows a compositional bias: basic and acidic residues. Positions 133–143 (SKLPKSLSSSP) are enriched in low complexity. 6 positions are modified to phosphoserine: Ser138, Ser140, Ser142, Ser174, Ser292, and Ser295. Residues 287 to 315 (AAAAPSPGSARSMGSHTTRDSSSLSSCTS) show a composition bias toward low complexity. Residues 318–344 (LEERSPAFRGPDRARAAVSRQPDKEFS) show a composition bias toward basic and acidic residues. The span at 345-356 (FMDEEEEDEIRV) shows a compositional bias: acidic residues.

The protein belongs to the BORG/CEP family. As to quaternary structure, interacts with CDC42 and RHOQ, in a GTP-dependent manner. Not detected in any of the adult tissues tested. May be expressed only in fetal or embryonic tissues.

It localises to the endomembrane system. The protein localises to the cytoplasm. It is found in the cytoskeleton. Its function is as follows. Probably involved in the organization of the actin cytoskeleton. May act downstream of CDC42 to induce actin filament assembly leading to cell shape changes. Induces pseudopodia formation, when overexpressed in fibroblasts. This Homo sapiens (Human) protein is Cdc42 effector protein 4 (CDC42EP4).